The following is a 232-amino-acid chain: Ornithine carbamoyltransferase (232 aa).

Residues Q15, R39, and 66–69 (HPTQ) contribute to the carbamoyl phosphate site. Residues N99, D163, and 167-168 (SM) each bind L-ornithine. Residues 204–207 (HCLP) and T232 contribute to the carbamoyl phosphate site.

Belongs to the aspartate/ornithine carbamoyltransferase superfamily. OTCase family.

The protein localises to the cytoplasm. The catalysed reaction is carbamoyl phosphate + L-ornithine = L-citrulline + phosphate + H(+). The protein operates within amino-acid biosynthesis; L-arginine biosynthesis; L-arginine from L-ornithine and carbamoyl phosphate: step 1/3. In terms of biological role, reversibly catalyzes the transfer of the carbamoyl group from carbamoyl phosphate (CP) to the N(epsilon) atom of ornithine (ORN) to produce L-citrulline. In Neisseria sicca, this protein is Ornithine carbamoyltransferase (argF).